The following is a 229-amino-acid chain: tRNA pseudouridine synthase B (229 aa).

D52 functions as the Nucleophile in the catalytic mechanism.

This sequence belongs to the pseudouridine synthase TruB family. Type 1 subfamily.

The enzyme catalyses uridine(55) in tRNA = pseudouridine(55) in tRNA. Responsible for synthesis of pseudouridine from uracil-55 in the psi GC loop of transfer RNAs. This Flavobacterium johnsoniae (strain ATCC 17061 / DSM 2064 / JCM 8514 / BCRC 14874 / CCUG 350202 / NBRC 14942 / NCIMB 11054 / UW101) (Cytophaga johnsonae) protein is tRNA pseudouridine synthase B.